Consider the following 678-residue polypeptide: Dihydroxyacetone phosphate acyltransferase (678 aa).

Residues S12 and S17 each carry the phosphoserine modification. Residues 161–166 carry the HXXXXD motif motif; that stretch reads HRSYID. K641 is modified (N6-acetyllysine). Positions 676 to 678 match the Microbody targeting signal motif; it reads AKL.

Belongs to the GPAT/DAPAT family. Part of a heterotrimeric complex composed of GNPAT, AGPS and a modified form of GNPAT. As to expression, highly expressed in liver and testis. Lower levels in heart, brain, lung and kidney. Detected in spleen.

The protein localises to the peroxisome membrane. It carries out the reaction dihydroxyacetone phosphate + an acyl-CoA = a 1-acylglycerone 3-phosphate + CoA. It catalyses the reaction dihydroxyacetone phosphate + hexadecanoyl-CoA = 1-hexadecanoylglycerone 3-phosphate + CoA. Its pathway is membrane lipid metabolism; glycerophospholipid metabolism. Functionally, dihydroxyacetonephosphate acyltransferase catalyzing the first step in the biosynthesis of plasmalogens, a subset of phospholipids that differ from other glycerolipids by having an alkyl chain attached through a vinyl ether linkage at the sn-1 position of the glycerol backbone, and which unique physical properties have an impact on various aspects of cell signaling and membrane biology. The protein is Dihydroxyacetone phosphate acyltransferase of Mus musculus (Mouse).